The primary structure comprises 502 residues: Glutamate dehydrogenase, mitochondrial (502 aa).

An NAD(+)-binding site is contributed by 96–98 (HHR). The substrate site is built by K102 and K126. An NAD(+)-binding site is contributed by D131. K138 is a catalytic residue. A substrate-binding site is contributed by S394.

This sequence belongs to the Glu/Leu/Phe/Val dehydrogenases family. In terms of assembly, homohexamer.

It localises to the mitochondrion matrix. It catalyses the reaction L-glutamate + NAD(+) + H2O = 2-oxoglutarate + NH4(+) + NADH + H(+). The enzyme catalyses L-glutamate + NADP(+) + H2O = 2-oxoglutarate + NH4(+) + NADPH + H(+). With respect to regulation, subject to allosteric regulation. Activated by AMP and ADP. The protein is Glutamate dehydrogenase, mitochondrial (gluD) of Dictyostelium discoideum (Social amoeba).